Here is a 239-residue protein sequence, read N- to C-terminus: UPF0173 metal-dependent hydrolase DVU_3308 (239 aa).

Belongs to the UPF0173 family.

This chain is UPF0173 metal-dependent hydrolase DVU_3308, found in Nitratidesulfovibrio vulgaris (strain ATCC 29579 / DSM 644 / CCUG 34227 / NCIMB 8303 / VKM B-1760 / Hildenborough) (Desulfovibrio vulgaris).